The sequence spans 146 residues: Ribosomal RNA large subunit methyltransferase H (146 aa).

Residues L62, G94, and 113 to 118 (LGELTL) each bind S-adenosyl-L-methionine.

It belongs to the RNA methyltransferase RlmH family. Homodimer.

The protein resides in the cytoplasm. It carries out the reaction pseudouridine(1915) in 23S rRNA + S-adenosyl-L-methionine = N(3)-methylpseudouridine(1915) in 23S rRNA + S-adenosyl-L-homocysteine + H(+). Functionally, specifically methylates the pseudouridine at position 1915 (m3Psi1915) in 23S rRNA. The chain is Ribosomal RNA large subunit methyltransferase H from Deinococcus radiodurans (strain ATCC 13939 / DSM 20539 / JCM 16871 / CCUG 27074 / LMG 4051 / NBRC 15346 / NCIMB 9279 / VKM B-1422 / R1).